Here is a 400-residue protein sequence, read N- to C-terminus: Calsequestrin-2 (400 aa).

The N-terminal stretch at 1–19 (MKRTHLFIVGVYVLSSCRA) is a signal peptide. Tyrosine 282 carries the post-translational modification Phosphotyrosine. An N-linked (GlcNAc...) asparagine glycan is attached at asparagine 335. The segment at 365–400 (VLSGKINTEDDDDEDDDDDNSDEEDNDDSDDDDDDE) is disordered. The segment covering 373 to 400 (EDDDDEDDDDDNSDEEDNDDSDDDDDDE) has biased composition (acidic residues).

It belongs to the calsequestrin family. In terms of assembly, monomer, homodimer and homooligomer. Mostly monomeric in the absence of calcium. Forms higher oligomers in a calcium-dependent manner. Dimers associate to form tetramers, that then form linear homomer chains. Interacts with ASPH and TRDN. Post-translationally, phosphorylation in the C-terminus, probably by CK2, moderately increases calcium buffering capacity. N-glycosylated.

It is found in the sarcoplasmic reticulum lumen. Calsequestrin is a high-capacity, moderate affinity, calcium-binding protein and thus acts as an internal calcium store in muscle. Calcium ions are bound by clusters of acidic residues at the protein surface, especially at the interface between subunits. Can bind around 60 Ca(2+) ions. Regulates the release of lumenal Ca(2+) via the calcium release channel RYR2; this plays an important role in triggering muscle contraction. Plays a role in excitation-contraction coupling in the heart and in regulating the rate of heart beats. This chain is Calsequestrin-2 (CASQ2), found in Pongo abelii (Sumatran orangutan).